Consider the following 480-residue polypeptide: Beta-glucosidase A (480 aa).

Glutamate 177 (proton donor) is an active-site residue. The active-site Nucleophile is the glutamate 378.

The protein belongs to the glycosyl hydrolase 1 family.

The catalysed reaction is Hydrolysis of terminal, non-reducing beta-D-glucosyl residues with release of beta-D-glucose.. This is Beta-glucosidase A (bglA) from Enterobacter agglomerans (Erwinia herbicola).